Reading from the N-terminus, the 342-residue chain is Uricase (342 aa).

Active-site charge relay system residues include Lys-35 and Thr-80. Urate-binding residues include Thr-80, Asp-81, Phe-204, Arg-221, Val-269, Gln-270, and Asn-296. The Charge relay system role is filled by His-298. Positions 340 to 342 (SHL) match the Microbody targeting signal motif.

It belongs to the uricase family. Malpighian tubules.

The protein resides in the peroxisome. It catalyses the reaction urate + O2 + H2O = 5-hydroxyisourate + H2O2. The protein operates within purine metabolism; urate degradation; (S)-allantoin from urate: step 1/3. Repressed by 20-hydroxyecdysone. Catalyzes the oxidation of uric acid to 5-hydroxyisourate, which is further processed to form (S)-allantoin. This Drosophila virilis (Fruit fly) protein is Uricase (Uro).